The sequence spans 134 residues: Small ribosomal subunit protein bS16 (134 aa).

Residues 80–134 are disordered; sequence GLAKRPTRSNPTKGEPGKKAQERLAMAKQAEEEAAAKAAEAAAAAAAPAEEAASE. Residues 115 to 134 show a composition bias toward low complexity; that stretch reads AKAAEAAAAAAAPAEEAASE.

Belongs to the bacterial ribosomal protein bS16 family.

This Brucella anthropi (strain ATCC 49188 / DSM 6882 / CCUG 24695 / JCM 21032 / LMG 3331 / NBRC 15819 / NCTC 12168 / Alc 37) (Ochrobactrum anthropi) protein is Small ribosomal subunit protein bS16.